Reading from the N-terminus, the 414-residue chain is Serine--tRNA ligase (414 aa).

T230–E232 contacts L-serine. ATP is bound at residue R261–E263. Position 284 (E284) interacts with L-serine. E348 to S351 is a binding site for ATP. S382 is a binding site for L-serine.

The protein belongs to the class-II aminoacyl-tRNA synthetase family. Type-1 seryl-tRNA synthetase subfamily. In terms of assembly, homodimer. The tRNA molecule binds across the dimer.

The protein resides in the cytoplasm. It catalyses the reaction tRNA(Ser) + L-serine + ATP = L-seryl-tRNA(Ser) + AMP + diphosphate + H(+). The catalysed reaction is tRNA(Sec) + L-serine + ATP = L-seryl-tRNA(Sec) + AMP + diphosphate + H(+). The protein operates within aminoacyl-tRNA biosynthesis; selenocysteinyl-tRNA(Sec) biosynthesis; L-seryl-tRNA(Sec) from L-serine and tRNA(Sec): step 1/1. Functionally, catalyzes the attachment of serine to tRNA(Ser). Is also able to aminoacylate tRNA(Sec) with serine, to form the misacylated tRNA L-seryl-tRNA(Sec), which will be further converted into selenocysteinyl-tRNA(Sec). The sequence is that of Serine--tRNA ligase from Campylobacter fetus subsp. fetus (strain 82-40).